An 835-amino-acid chain; its full sequence is Leucine--tRNA ligase (835 aa).

The short motif at 36 to 46 (PYPSGKIHVGH) is the 'HIGH' region element. The 'KMSKS' region motif lies at 602–606 (KMSKS). Position 605 (Lys605) interacts with ATP.

It belongs to the class-I aminoacyl-tRNA synthetase family.

Its subcellular location is the cytoplasm. The enzyme catalyses tRNA(Leu) + L-leucine + ATP = L-leucyl-tRNA(Leu) + AMP + diphosphate. The polypeptide is Leucine--tRNA ligase (Rickettsia peacockii (strain Rustic)).